A 161-amino-acid polypeptide reads, in one-letter code: Large ribosomal subunit protein uL10 (161 aa).

Belongs to the universal ribosomal protein uL10 family. Part of the ribosomal stalk of the 50S ribosomal subunit. The N-terminus interacts with L11 and the large rRNA to form the base of the stalk. The C-terminus forms an elongated spine to which L12 dimers bind in a sequential fashion forming a multimeric L10(L12)X complex.

Its function is as follows. Forms part of the ribosomal stalk, playing a central role in the interaction of the ribosome with GTP-bound translation factors. In Campylobacter curvus (strain 525.92), this protein is Large ribosomal subunit protein uL10.